The chain runs to 142 residues: Transcriptional regulator MraZ (142 aa).

SpoVT-AbrB domains lie at Ala5–Glu51 and Ala77–Thr120.

It belongs to the MraZ family. Forms oligomers.

The protein resides in the cytoplasm. It is found in the nucleoid. This Paraburkholderia xenovorans (strain LB400) protein is Transcriptional regulator MraZ.